Reading from the N-terminus, the 175-residue chain is Lactobacillus up-regulated protein (175 aa).

The first 18 residues, 1 to 18 (MRSIFLAVLGLMATSSLA), serve as a signal peptide directing secretion. Asn59 is a glycosylation site (N-linked (GlcNAc...) asparagine).

In Emericella nidulans (strain FGSC A4 / ATCC 38163 / CBS 112.46 / NRRL 194 / M139) (Aspergillus nidulans), this protein is Lactobacillus up-regulated protein (lbuA).